Here is a 340-residue protein sequence, read N- to C-terminus: Glycerol-3-phosphate dehydrogenase [NAD(P)+] (340 aa).

Residues serine 11, tryptophan 12, arginine 33, and lysine 106 each coordinate NADPH. 3 residues coordinate sn-glycerol 3-phosphate: lysine 106, glycine 137, and serine 139. Alanine 141 lines the NADPH pocket. The sn-glycerol 3-phosphate site is built by lysine 192, aspartate 245, serine 255, arginine 256, and asparagine 257. Lysine 192 functions as the Proton acceptor in the catalytic mechanism. Arginine 256 is an NADPH binding site. 2 residues coordinate NADPH: valine 280 and glutamate 282.

The protein belongs to the NAD-dependent glycerol-3-phosphate dehydrogenase family.

The protein localises to the cytoplasm. The enzyme catalyses sn-glycerol 3-phosphate + NAD(+) = dihydroxyacetone phosphate + NADH + H(+). It carries out the reaction sn-glycerol 3-phosphate + NADP(+) = dihydroxyacetone phosphate + NADPH + H(+). Its pathway is membrane lipid metabolism; glycerophospholipid metabolism. In terms of biological role, catalyzes the reduction of the glycolytic intermediate dihydroxyacetone phosphate (DHAP) to sn-glycerol 3-phosphate (G3P), the key precursor for phospholipid synthesis. This is Glycerol-3-phosphate dehydrogenase [NAD(P)+] from Bacillus anthracis (strain A0248).